The primary structure comprises 317 residues: Protoheme IX farnesyltransferase (317 aa).

9 helical membrane-spanning segments follow: residues 39 to 58 (VMSL…PGSL), 62 to 84 (LGAI…NMWY), 100 to 120 (IPAG…LAVG), 123 to 143 (LVMW…AIFF), 160 to 180 (IVIG…AVTG), 184 to 204 (LMPV…FWSL), 233 to 253 (IMAY…LGDT), 256 to 276 (VYGL…WRVL), and 293 to 313 (ARAA…ALAV).

Belongs to the UbiA prenyltransferase family. Protoheme IX farnesyltransferase subfamily.

The protein localises to the cell inner membrane. It carries out the reaction heme b + (2E,6E)-farnesyl diphosphate + H2O = Fe(II)-heme o + diphosphate. Its pathway is porphyrin-containing compound metabolism; heme O biosynthesis; heme O from protoheme: step 1/1. Functionally, converts heme B (protoheme IX) to heme O by substitution of the vinyl group on carbon 2 of heme B porphyrin ring with a hydroxyethyl farnesyl side group. This Granulibacter bethesdensis (strain ATCC BAA-1260 / CGDNIH1) protein is Protoheme IX farnesyltransferase.